A 274-amino-acid chain; its full sequence is Karrikin insensitive 2 receptor IA (274 aa).

The active-site Nucleophile is S95. Active-site residues include D217 and H246.

The protein belongs to the AB hydrolase superfamily. Interacts with MAX2A and MAX2B in the presence of (-)-germacrene D, thus forming an E3 SCF ubiquitin ligase complex (ASK-cullin-F-box) containing MAX2A or MAX2B and KAI2IA recognizing SMAX1A; this leads to the subsequent degradation of the transcriptional corepressor SMAX1A, thus triggering the activation of a downstream signaling cascade. In terms of tissue distribution, strongly expressed in stigma.

Its subcellular location is the nucleus. It is found in the cytoplasm. With respect to regulation, hydrolysis activity toward yoshimulactone green (YLG), a fluorescent agonist to strigolactone receptor, is inhibited by (-)-germacrene D and GR24, a synthetic strigolactone analog. Hydrolase involved in the olfaction of sesquiterpene volatile organic compounds (VOCs) during volatile plant communication in a MAX2 proteins-dependent manner. Acts as a karrikin-insensitive receptor that stereospecifically perceives and binds to (-)-germacrene D, particularly in stigmas, and triggers a signaling cascade influencing plant fitness, as the result of reproductive organ growth-promoting effect; this process involves an interaction with MAX2 proteins (e.g. MAX2A and MAX2B) and the subsequent degradation of SMAX1a, a transcriptional corepressor. The polypeptide is Karrikin insensitive 2 receptor IA (Petunia hybrida (Petunia)).